Here is a 332-residue protein sequence, read N- to C-terminus: Adenosine deaminase (332 aa).

Positions 12 and 14 each coordinate Zn(2+). Residues H14, D16, and G170 each contribute to the substrate site. Residue H197 participates in Zn(2+) binding. E200 serves as the catalytic Proton donor. Residue D278 participates in Zn(2+) binding.

The protein belongs to the metallo-dependent hydrolases superfamily. Adenosine and AMP deaminases family. Adenosine deaminase subfamily. Zn(2+) serves as cofactor.

It catalyses the reaction adenosine + H2O + H(+) = inosine + NH4(+). The enzyme catalyses 2'-deoxyadenosine + H2O + H(+) = 2'-deoxyinosine + NH4(+). Functionally, catalyzes the hydrolytic deamination of adenosine and 2-deoxyadenosine. The protein is Adenosine deaminase of Clostridium perfringens (strain ATCC 13124 / DSM 756 / JCM 1290 / NCIMB 6125 / NCTC 8237 / Type A).